Consider the following 284-residue polypeptide: RNA polymerase sigma factor RpoH (284 aa).

The sigma-70 factor domain-2 stretch occupies residues 54 to 123 (MVLAHLRFVV…IHEFILRNWR (70 aa)). Residues 78 to 81 (DLIQ) carry the Interaction with polymerase core subunit RpoC motif. The tract at residues 229–280 (ALEGLDERSRDILQQRWLSEEKATLHDLAEKYNVSAERIRQLEKNAMSKLKG) is sigma-70 factor domain-4. Positions 253 to 272 (LHDLAEKYNVSAERIRQLEK) form a DNA-binding region, H-T-H motif.

It belongs to the sigma-70 factor family. RpoH subfamily. Interacts with the RNA polymerase core enzyme.

The protein localises to the cytoplasm. Sigma factors are initiation factors that promote the attachment of RNA polymerase to specific initiation sites and are then released. This sigma factor is involved in regulation of expression of heat shock genes. This Pseudomonas aeruginosa (strain ATCC 15692 / DSM 22644 / CIP 104116 / JCM 14847 / LMG 12228 / 1C / PRS 101 / PAO1) protein is RNA polymerase sigma factor RpoH.